A 168-amino-acid chain; its full sequence is Nicotinamide-nucleotide adenylyltransferase (168 aa).

It belongs to the archaeal NMN adenylyltransferase family.

Its subcellular location is the cytoplasm. The enzyme catalyses beta-nicotinamide D-ribonucleotide + ATP + H(+) = diphosphate + NAD(+). It functions in the pathway cofactor biosynthesis; NAD(+) biosynthesis; NAD(+) from nicotinamide D-ribonucleotide: step 1/1. The chain is Nicotinamide-nucleotide adenylyltransferase from Methanosphaerula palustris (strain ATCC BAA-1556 / DSM 19958 / E1-9c).